Here is a 79-residue protein sequence, read N- to C-terminus: Small ribosomal subunit protein bS16 (79 aa).

Belongs to the bacterial ribosomal protein bS16 family.

The protein is Small ribosomal subunit protein bS16 of Nitratidesulfovibrio vulgaris (strain ATCC 29579 / DSM 644 / CCUG 34227 / NCIMB 8303 / VKM B-1760 / Hildenborough) (Desulfovibrio vulgaris).